The chain runs to 579 residues: General transcriptional corepressor tupA (579 aa).

The segment covering 83–101 has biased composition (polar residues); sequence NINASQRDLNSPSTFRSNS. Positions 83–258 are disordered; that stretch reads NINASQRDLN…ENGKEKGTDW (176 aa). Low complexity-rich tracts occupy residues 109 to 128, 157 to 198, and 207 to 224; these read NNNNNNIINNNNNNNNNNNN, QQPG…LSPL, and MGNNMSGNSMSMNNNNNN. The segment covering 227–256 has biased composition (basic and acidic residues); it reads KKPDMEEVKEEDRRRHDTEMSEENGKEKGT. 7 WD repeats span residues 279-319, 325-364, 367-406, 413-452, 455-494, 501-540, and 543-579; these read QHNS…HAFV, DGDLYIRSVCFSPDGNYLATGAEDKTVKVWDIHTKKIQHT, GHELDIYSLDYSSDGRFIVSGSGDKKAKIWDIEKGKCAFT, GPKNGVTSVAMSPDGRLVAAGSLDNIVRLWDAQTGYFLER, GHLDSVYSVAFSPDGKSLASGSLDKSLKLWDLSGSRSRSR, GHKDFVLSVAFSPDGSWLISGSKDRSVQFWDPRNGTTHMM, and GHKNSVISVALSPKNNSHGVFATGSGDFRSRLWKYDS.

Belongs to the WD repeat TUP1 family. In terms of assembly, associates with trfA to form the trfA-tupA corepressor complex.

It is found in the nucleus. Functionally, acts as a component of the trfA-tupA corepressor complex which is involved in the repression of many genes in a wide variety of physiological processes. May also be involved in the derepression of at least some target genes. The complex is recruited to target genes by interaction with DNA-bound transcriptional repressors. The complex recruits histone deacetylases to produce a repressive chromatin structure, interacts with hypoacetylated N-terminal tails of histones H3 and H4 that have been programmed for repression by the action of histone deacetylases and interferes directly with the transcriptional machinery by associating with the RNA polymerase II mediator complex. This chain is General transcriptional corepressor tupA (tupA), found in Dictyostelium discoideum (Social amoeba).